The following is a 209-amino-acid chain: Chaperone protein TorD (209 aa).

This sequence belongs to the TorD/DmsD family. TorD subfamily.

Its subcellular location is the cytoplasm. In terms of biological role, involved in the biogenesis of TorA. Acts on TorA before the insertion of the molybdenum cofactor and, as a result, probably favors a conformation of the apoenzyme that is competent for acquiring the cofactor. The protein is Chaperone protein TorD of Shewanella sp. (strain MR-4).